Reading from the N-terminus, the 251-residue chain is Hydroxyacylglutathione hydrolase (251 aa).

Zn(2+) contacts are provided by His53, His55, Asp57, His58, His110, Asp127, and His165.

Belongs to the metallo-beta-lactamase superfamily. Glyoxalase II family. Monomer. Zn(2+) is required as a cofactor.

It carries out the reaction an S-(2-hydroxyacyl)glutathione + H2O = a 2-hydroxy carboxylate + glutathione + H(+). Its pathway is secondary metabolite metabolism; methylglyoxal degradation; (R)-lactate from methylglyoxal: step 2/2. Functionally, thiolesterase that catalyzes the hydrolysis of S-D-lactoyl-glutathione to form glutathione and D-lactic acid. This chain is Hydroxyacylglutathione hydrolase, found in Escherichia fergusonii (strain ATCC 35469 / DSM 13698 / CCUG 18766 / IAM 14443 / JCM 21226 / LMG 7866 / NBRC 102419 / NCTC 12128 / CDC 0568-73).